A 669-amino-acid chain; its full sequence is Beta-galactosidase (669 aa).

The signal sequence occupies residues 1–24 (MDFPGAARLLSLLLVPLLLGPARG). The propeptide occupies 25–29 (LRNAS). Residue Asn-27 is glycosylated (N-linked (GlcNAc...) asparagine). Residues Tyr-84, Glu-130, and Asn-188 each coordinate substrate. The active-site Proton donor is the Glu-189. Residues Cys-196 and Cys-231 are joined by a disulfide bond. Asn-248 carries N-linked (GlcNAc...) asparagine glycosylation. The active-site Nucleophile is the Glu-269. Tyr-334 is a substrate binding site. Asn-465, Asn-499, Asn-547, and Asn-557 each carry an N-linked (GlcNAc...) asparagine glycan. Residues Cys-628 and Cys-636 are joined by a disulfide bond. The interval 649–669 (TPTSSHPLPDLSDRDSGWDRV) is disordered. Positions 659–669 (LSDRDSGWDRV) are enriched in basic and acidic residues.

Belongs to the glycosyl hydrolase 35 family. In terms of assembly, homodimer. May form higher multimers.

It localises to the lysosome. It catalyses the reaction Hydrolysis of terminal non-reducing beta-D-galactose residues in beta-D-galactosides.. Cleaves beta-linked terminal galactosyl residues from gangliosides, glycoproteins, and glycosaminoglycans. This is Beta-galactosidase (GLB1) from Felis catus (Cat).